The sequence spans 243 residues: 4-hydroxy-tetrahydrodipicolinate reductase (243 aa).

NAD(+) is bound by residues 9–14 (GANGKM), 78–80 (GTS), and 104–107 (APNF). H134 (proton donor/acceptor) is an active-site residue. H135 provides a ligand contact to (S)-2,3,4,5-tetrahydrodipicolinate. K138 functions as the Proton donor in the catalytic mechanism. 144-145 (GT) is a binding site for (S)-2,3,4,5-tetrahydrodipicolinate.

The protein belongs to the DapB family.

It is found in the cytoplasm. It catalyses the reaction (S)-2,3,4,5-tetrahydrodipicolinate + NAD(+) + H2O = (2S,4S)-4-hydroxy-2,3,4,5-tetrahydrodipicolinate + NADH + H(+). It carries out the reaction (S)-2,3,4,5-tetrahydrodipicolinate + NADP(+) + H2O = (2S,4S)-4-hydroxy-2,3,4,5-tetrahydrodipicolinate + NADPH + H(+). It functions in the pathway amino-acid biosynthesis; L-lysine biosynthesis via DAP pathway; (S)-tetrahydrodipicolinate from L-aspartate: step 4/4. In terms of biological role, catalyzes the conversion of 4-hydroxy-tetrahydrodipicolinate (HTPA) to tetrahydrodipicolinate. This Legionella pneumophila (strain Paris) protein is 4-hydroxy-tetrahydrodipicolinate reductase.